We begin with the raw amino-acid sequence, 659 residues long: Cytochrome bo(3) ubiquinol oxidase subunit 1 (659 aa).

Residues 1–14 lie on the Extracellular side of the membrane; that stretch reads MFGKLSLNSIPYHD. A helical membrane pass occupies residues 15–35; sequence PIIMITCCVVILVFLVISIII. Over 36 to 56 the chain is Cytoplasmic; it reads TIAQKWQYLWNEWCCTVDHKK. A helical transmembrane segment spans residues 57-77; that stretch reads IAKMYIFLAFIMLFRGFADAI. The a ubiquinone site is built by arginine 71, aspartate 75, and histidine 101. Residues 78–109 lie on the Extracellular side of the membrane; the sequence is MMRMQQFLVSSYHGNGTGFLPPHHYDQIFTAH. Histidine 109 contributes to the heme b binding site. Residues 110–130 form a helical membrane-spanning segment; that stretch reads GVIMIFFVAMPLVIGLMNFVV. Residues 131–148 are Cytoplasmic-facing; sequence PLQIGSRDVAFPFLNNLS. Residues 149–169 form a helical membrane-spanning segment; sequence LWLTIFSALLMNVSLGIGEFA. Residues 170-192 are Extracellular-facing; the sequence is QTGWLAYPPLSELQYSPGVGVDY. Tryptophan 173 lines the heme b pocket. The chain crosses the membrane as a helical span at residues 193–213; that stretch reads WIWSLQISGIGTTLTAINFLV. The Cytoplasmic portion of the chain corresponds to 214-235; the sequence is TIIKMRSSGMNWFKIPVFTWTS. The chain crosses the membrane as a helical span at residues 236–256; that stretch reads FCTNILIIASFPVLTVSLLLL. The Extracellular segment spans residues 257-280; the sequence is TLDRYLGFHFFTNDFGGNMMMYVN. Residues 281–301 form a helical membrane-spanning segment; sequence LIWIWGHPEVYILILPVFGIF. Histidine 287 contacts Cu(2+). Residues 287 to 291 constitute a cross-link (1'-histidyl-3'-tyrosine (His-Tyr)); it reads HPEVY. Tyrosine 291 provides a ligand contact to Fe(II)-heme o. Over 302-318 the chain is Cytoplasmic; the sequence is SEVVATFSSKELFGYTS. The chain crosses the membrane as a helical span at residues 319–339; it reads LIWATIVITILSFIVWLHHFF. Histidine 336 and histidine 337 together coordinate Cu(2+). The Extracellular portion of the chain corresponds to 340–350; it reads TMGASANVNAF. Residues 351 to 371 form a helical membrane-spanning segment; that stretch reads FGITTMIISIPTGVKIFNWLF. The Cytoplasmic segment spans residues 372-382; it reads TMYRGNVRINS. A helical membrane pass occupies residues 383–403; the sequence is IMLWTIGFLITFSIGGMAGVL. Topologically, residues 404-416 are extracellular; sequence LSLPVIDFSLHNS. 2 residues coordinate Fe(II)-heme o: histidine 414 and histidine 422. A helical membrane pass occupies residues 417–437; it reads LFLVAHFHNVIIGGVVFGCFA. Heme b is bound at residue histidine 424. The Cytoplasmic segment spans residues 438-459; it reads GITYWFPKLFGFMLSEKWGKRA. A helical membrane pass occupies residues 460–480; it reads FWCWFFGFFCAFMPLYALGLM. Topologically, residues 481 to 499 are extracellular; that stretch reads GMTRRLSQNINPQFHSMLT. Residues arginine 484 and arginine 485 each contribute to the heme b site. Residues 500–520 traverse the membrane as a helical segment; sequence IAALGTILIFIGIVFQIIQIF. At 521-587 the chain is on the cytoplasmic side; the sequence is VSIRDRNLNR…KLPILYTSFH (67 aa). A helical membrane pass occupies residues 588 to 608; that stretch reads MPKNTKFGFLIGFFAFLLGFS. Position 609 (alanine 609) is a topological domain, extracellular. A helical membrane pass occupies residues 610–630; the sequence is VWYIFWLFFISFFVIIYLLVI. Over 631 to 659 the chain is Cytoplasmic; that stretch reads KSLDTNCDYIISIEEIKEIEKCINIKKMD.

It belongs to the heme-copper respiratory oxidase family. In terms of assembly, the cytochrome bo(3) ubiquinol oxidase complex is a heterooctamer of two A chains, two B chains, two C chains and two D chains. It depends on Cu(2+) as a cofactor. The cofactor is heme b. Requires Fe(II)-heme o as cofactor.

It localises to the cell membrane. The enzyme catalyses 2 a ubiquinol + O2 + n H(+)(in) = 2 a ubiquinone + 2 H2O + n H(+)(out). Its function is as follows. Cytochrome bo(3) ubiquinol oxidase is the terminal enzyme in the aerobic respiratory chain. Catalyzes the four-electron reduction of O2 to water, using a ubiquinol as a membrane soluble electron donor for molecular oxygen reduction. Has proton pump activity across the membrane in addition to electron transfer, pumping 2 protons/electron and generating a proton motive force. All the redox centers of this enzyme complex are located within the largest subunit, subunit I. Protons are probably pumped via D- and K- channels found in this subunit. The sequence is that of Cytochrome bo(3) ubiquinol oxidase subunit 1 (cyoB) from Buchnera aphidicola subsp. Baizongia pistaciae (strain Bp).